The sequence spans 422 residues: Aliphatic (R)-hydroxynitrile lyase (422 aa).

The Zn(2+) site is built by cysteine 63, histidine 85, cysteine 115, cysteine 118, cysteine 121, cysteine 129, and cysteine 199.

The protein belongs to the zinc-containing alcohol dehydrogenase family. Homodimer. It depends on Zn(2+) as a cofactor.

It catalyses the reaction (2R)-2-hydroxy-2-methylbutanenitrile = butan-2-one + hydrogen cyanide. Its function is as follows. Involved in the catabolism of cyanogenic glycosides. Naturally occurring substrates are the aliphatic acetone cyanohydrin and butan-2-one cyanohydrin, which are the aglycones of the cyanogenic glycosides linamarin, lotaustralin, linustatin and neolinustatin. Can use various aliphatic ketones and aldehydes as substrates, but not aromatic ketones. The protein is Aliphatic (R)-hydroxynitrile lyase of Linum usitatissimum (Flax).